The following is a 327-amino-acid chain: Phenylalanine--tRNA ligase alpha subunit (327 aa).

Glu252 contributes to the Mg(2+) binding site.

The protein belongs to the class-II aminoacyl-tRNA synthetase family. Phe-tRNA synthetase alpha subunit type 1 subfamily. Tetramer of two alpha and two beta subunits. Mg(2+) is required as a cofactor.

Its subcellular location is the cytoplasm. The catalysed reaction is tRNA(Phe) + L-phenylalanine + ATP = L-phenylalanyl-tRNA(Phe) + AMP + diphosphate + H(+). This Pectobacterium carotovorum subsp. carotovorum (strain PC1) protein is Phenylalanine--tRNA ligase alpha subunit.